The primary structure comprises 498 residues: COP9 signalosome complex subunit 1 (498 aa).

The 182-residue stretch at 249–430 folds into the PCI domain; that stretch reads SYLEAANSFI…HVLVSTQGDK (182 aa).

This sequence belongs to the CSN1 family. As to quaternary structure, component of the COP9 signalosome (CSN) complex.

It is found in the cytoplasm. The protein resides in the nucleus. Component of the COP9 signalosome (CSN) complex that acts as an regulator of the ubiquitin (Ubl) conjugation pathway by mediating the deneddylation of the cullin subunit of SCF-type E3 ubiquitin-protein ligase complexes. The CSN complex seems to link protein degradation to sexual development. Required for fruit body formation. In Emericella nidulans (strain FGSC A4 / ATCC 38163 / CBS 112.46 / NRRL 194 / M139) (Aspergillus nidulans), this protein is COP9 signalosome complex subunit 1 (csnA).